A 299-amino-acid chain; its full sequence is Probable endonuclease 4 (299 aa).

9 residues coordinate Zn(2+): histidine 69, histidine 110, glutamate 145, aspartate 179, histidine 182, histidine 214, aspartate 227, histidine 229, and glutamate 259.

This sequence belongs to the AP endonuclease 2 family. Zn(2+) is required as a cofactor.

The catalysed reaction is Endonucleolytic cleavage to 5'-phosphooligonucleotide end-products.. Functionally, endonuclease IV plays a role in DNA repair. It cleaves phosphodiester bonds at apurinic or apyrimidinic (AP) sites, generating a 3'-hydroxyl group and a 5'-terminal sugar phosphate. The chain is Probable endonuclease 4 from Geobacillus kaustophilus (strain HTA426).